The primary structure comprises 213 residues: Large ribosomal subunit protein uL3 (213 aa).

Position 151 is an N5-methylglutamine (Gln151).

It belongs to the universal ribosomal protein uL3 family. In terms of assembly, part of the 50S ribosomal subunit. Forms a cluster with proteins L14 and L19. In terms of processing, methylated by PrmB.

Its function is as follows. One of the primary rRNA binding proteins, it binds directly near the 3'-end of the 23S rRNA, where it nucleates assembly of the 50S subunit. This Allorhizobium ampelinum (strain ATCC BAA-846 / DSM 112012 / S4) (Agrobacterium vitis (strain S4)) protein is Large ribosomal subunit protein uL3.